A 232-amino-acid polypeptide reads, in one-letter code: Exosome complex component RRP40 (232 aa).

It belongs to the RRP40 family. As to quaternary structure, component of the RNA exosome complex. Specifically part of the catalytically inactive RNA exosome core complex.

Its subcellular location is the cytoplasm. It localises to the nucleus. The protein resides in the nucleolus. In terms of biological role, non-catalytic component of the RNA exosome complex which has 3'-&gt;5' exoribonuclease activity and participates in a multitude of cellular RNA processing and degradation events. In the nucleus, the RNA exosome complex is involved in proper maturation of stable RNA species such as rRNA, snRNA and snoRNA, in the elimination of RNA processing by-products and non-coding 'pervasive' transcripts such as antisense RNA species, and of mRNAs with processing defects, thereby limiting or excluding their export to the cytoplasm. In the cytoplasm, the RNA exosome complex is involved in general mRNA turnover and specifically degrades inherently unstable mRNAs containing AU-rich elements (AREs) within their 3' untranslated regions, and in RNA surveillance pathways, preventing translation of aberrant mRNAs. The catalytic inactive RNA exosome core complex of 9 subunits is proposed to play a pivotal role in the binding and presentation of RNA for ribonucleolysis, and to serve as a scaffold for the association with catalytic subunits and accessory proteins or complexes. Required generally for normal embryonic and neuronal development. Also plays a critical role in the maintenance of neuronal function in mature flies by controlling the levels of specific mRNAs such as the synaptic regulator Arc1. This chain is Exosome complex component RRP40, found in Drosophila melanogaster (Fruit fly).